The chain runs to 441 residues: MEDAWEADALEAAEAAAAAAQAVAADAPTTTPSPRTLQRQRACEALMEGDAPDAAPDAPLRCAIAWDGVNCWPETPAGALAVQPCFDELNGIRYDIRQNATRMCYSNGTWRNYSDYVHCRELVEAESDEDAAMAFVFFVGFCLSLVAIAVAIWIFLYFKDLRCLRNTIHTNLMATYICNDATWIISAVVQEYVENGGLCSVLAVLMHYFYLTNFFWMFVEGLYLFLLVVATFTGEKVKLQIYIIIGWGIPGVIVVTWAIIKHLGKTAPDNAGESHPMVLLIKHCPWMAEDYFDWIHQAPVITVLAVNLVFLFSIMWVLITKLQSANTAETQQYRKATKALLVLFPLLGITYILMMQGPMDGVAGHVFRNAQALLLSLQGFTVALFYCFLNTEVQNTLRHRMSRWRETRTVGGGRRYTLSGHSKDWSPRSRTESIRCLQHRS.

N-linked (GlcNAc...) asparagine glycans are attached at residues N99, N107, and N112. Residues 135 to 158 traverse the membrane as a helical segment; it reads FVFFVGFCLSLVAIAVAIWIFLYF. At 159 to 166 the chain is on the cytoplasmic side; that stretch reads KDLRCLRN. A helical transmembrane segment spans residues 167-187; sequence TIHTNLMATYICNDATWIISA. The Extracellular portion of the chain corresponds to 188–194; sequence VVQEYVE. The helical transmembrane segment at 195 to 224 threads the bilayer; that stretch reads NGGLCSVLAVLMHYFYLTNFFWMFVEGLYL. Residues 225 to 238 are Cytoplasmic-facing; sequence FLLVVATFTGEKVK. Residues 239-260 form a helical membrane-spanning segment; sequence LQIYIIIGWGIPGVIVVTWAII. At 261–291 the chain is on the extracellular side; sequence KHLGKTAPDNAGESHPMVLLIKHCPWMAEDY. The chain crosses the membrane as a helical span at residues 292 to 315; it reads FDWIHQAPVITVLAVNLVFLFSIM. The Cytoplasmic portion of the chain corresponds to 316-338; the sequence is WVLITKLQSANTAETQQYRKATK. Residues 339 to 357 form a helical membrane-spanning segment; it reads ALLVLFPLLGITYILMMQG. Residues 358 to 371 are Extracellular-facing; sequence PMDGVAGHVFRNAQ. The chain crosses the membrane as a helical span at residues 372–391; the sequence is ALLLSLQGFTVALFYCFLNT. The Cytoplasmic portion of the chain corresponds to 392-441; that stretch reads EVQNTLRHRMSRWRETRTVGGGRRYTLSGHSKDWSPRSRTESIRCLQHRS.

Belongs to the G-protein coupled receptor 2 family. In terms of tissue distribution, expressed in Malpighian tubules.

The protein resides in the cell membrane. Its function is as follows. Receptor for the insect diurectic hormone. The activity of this receptor is mediated by G proteins which activate adenylyl cyclase. The protein is Diuretic hormone receptor of Acheta domesticus (House cricket).